Here is a 398-residue protein sequence, read N- to C-terminus: Stearoyl-[acyl-carrier-protein] 9-desaturase, chloroplastic (398 aa).

A chloroplast-targeting transit peptide spans 1–34 (MALKLHHTAFNPSMAVTSSGLPRSYHLRSHRVFM). The segment at 46-66 (IPNAKKPHMPPREAHVQKTHS) is disordered. Fe cation-binding residues include Glu-140, Glu-178, His-181, Glu-231, Glu-264, and His-267.

The protein belongs to the fatty acid desaturase type 2 family. Homodimer. It depends on Fe(2+) as a cofactor.

Its subcellular location is the plastid. It localises to the chloroplast. The enzyme catalyses octadecanoyl-[ACP] + 2 reduced [2Fe-2S]-[ferredoxin] + O2 + 2 H(+) = (9Z)-octadecenoyl-[ACP] + 2 oxidized [2Fe-2S]-[ferredoxin] + 2 H2O. It functions in the pathway lipid metabolism; fatty acid metabolism. In terms of biological role, converts stearoyl-ACP to oleoyl-ACP by introduction of a cis double bond between carbons 9 and 10 of the acyl chain. The polypeptide is Stearoyl-[acyl-carrier-protein] 9-desaturase, chloroplastic (Simmondsia chinensis (Jojoba)).